A 305-amino-acid polypeptide reads, in one-letter code: MNTSQPALHTSMLTSLPLLARGKVRDNYAVGIDRILMVASDRLSAFDVIMGEPIPGKGALLTQMALFWFDKLGPKGLNLCPIHLTGDAPESVVTAAEVPQVTGRSMLVKRLKPLPVEAVVRGYLAGSGWKEYQHNGAVCGVKLPAGLQNASKLPEPIYTPAAKAAAGDHDENITFEQTVEMIGLDLATRIRDISIAIYKAASEIARAKGIIIADTKFEFGLDADGTLTLMDEVLTPDSSRFWPAESYQEGINPPSFDKQFVRDWLEQVQVNGKPWNKTPPAPRVPDEVIAKTAAKYQEALTRLIG.

Belongs to the SAICAR synthetase family.

It catalyses the reaction 5-amino-1-(5-phospho-D-ribosyl)imidazole-4-carboxylate + L-aspartate + ATP = (2S)-2-[5-amino-1-(5-phospho-beta-D-ribosyl)imidazole-4-carboxamido]succinate + ADP + phosphate + 2 H(+). The protein operates within purine metabolism; IMP biosynthesis via de novo pathway; 5-amino-1-(5-phospho-D-ribosyl)imidazole-4-carboxamide from 5-amino-1-(5-phospho-D-ribosyl)imidazole-4-carboxylate: step 1/2. This chain is Phosphoribosylaminoimidazole-succinocarboxamide synthase, found in Albidiferax ferrireducens (strain ATCC BAA-621 / DSM 15236 / T118) (Rhodoferax ferrireducens).